Reading from the N-terminus, the 357-residue chain is MELNKNLIIPFAKQAGLTSFASMSAVKKALSTKKVGHTGTLDLFADGLLVLLTGQLTRLADIISAEKKTYEAWVEFGTETDTLDPEGEPVLTAPLPSYKNLTESIPSFLGKILQRPPEFSAIKINGKRASDRIRSGEKIKIAEREIEIFKIELKGIITDSGLEFTEKDFTNINAELKIRYAHIVVECSKGTYIRSLVRDLARKASSCAYVRALRRTAVGNFKLEDAAGFDLLNNFSAAPENLFLKEKKILDAAAGKKFYKQKEIDFLEIMAKSIIFSPKTAENLKLPYLFLDRKYLNDFYNGKKIKFNWFLNTDEVLENITGLDLENKKTCVFCGDLWIGIIGLNKNCPKYETVIKN.

Asp42 functions as the Nucleophile in the catalytic mechanism.

The protein belongs to the pseudouridine synthase TruB family. Type 1 subfamily.

The enzyme catalyses uridine(55) in tRNA = pseudouridine(55) in tRNA. Responsible for synthesis of pseudouridine from uracil-55 in the psi GC loop of transfer RNAs. The sequence is that of tRNA pseudouridine synthase B from Treponema denticola (strain ATCC 35405 / DSM 14222 / CIP 103919 / JCM 8153 / KCTC 15104).